Reading from the N-terminus, the 200-residue chain is Recombination protein RecR (200 aa).

A C4-type zinc finger spans residues cysteine 57–cysteine 72. Residues glycine 81–proline 176 enclose the Toprim domain.

It belongs to the RecR family.

May play a role in DNA repair. It seems to be involved in an RecBC-independent recombinational process of DNA repair. It may act with RecF and RecO. The protein is Recombination protein RecR of Actinobacillus succinogenes (strain ATCC 55618 / DSM 22257 / CCUG 43843 / 130Z).